We begin with the raw amino-acid sequence, 192 residues long: Ion-translocating oxidoreductase complex subunit A (192 aa).

Transmembrane regions (helical) follow at residues L5 to L25, I39 to V59, L65 to V85, A102 to L122, A134 to M154, and A171 to V191.

This sequence belongs to the NqrDE/RnfAE family. As to quaternary structure, the complex is composed of six subunits: RnfA, RnfB, RnfC, RnfD, RnfE and RnfG.

Its subcellular location is the cell inner membrane. Its function is as follows. Part of a membrane-bound complex that couples electron transfer with translocation of ions across the membrane. The sequence is that of Ion-translocating oxidoreductase complex subunit A from Shewanella putrefaciens (strain CN-32 / ATCC BAA-453).